Consider the following 231-residue polypeptide: Ribose-5-phosphate isomerase A (231 aa).

Substrate-binding positions include 40 to 43, 93 to 96, and 106 to 109; these read TGST, DGAD, and KGGG. Catalysis depends on Glu115, which acts as the Proton acceptor. Position 133 (Lys133) interacts with substrate.

Belongs to the ribose 5-phosphate isomerase family. Homodimer.

The catalysed reaction is aldehydo-D-ribose 5-phosphate = D-ribulose 5-phosphate. It participates in carbohydrate degradation; pentose phosphate pathway; D-ribose 5-phosphate from D-ribulose 5-phosphate (non-oxidative stage): step 1/1. In terms of biological role, catalyzes the reversible conversion of ribose-5-phosphate to ribulose 5-phosphate. The polypeptide is Ribose-5-phosphate isomerase A (Escherichia coli O1:K1 / APEC).